Reading from the N-terminus, the 1779-residue chain is 6-methylsalicylic acid synthase (1779 aa).

The span at 1–11 (MSASRSSTKFS) shows a compositional bias: polar residues. The interval 1-40 (MSASRSSTKFSTPAEGSDNGKEFTTPATSTEGHEVPDRPG) is disordered. Residues 31–40 (EGHEVPDRPG) show a composition bias toward basic and acidic residues. Residues 43 to 472 (LADVAIIGMA…GTVSHAVLEA (430 aa)) form the Ketosynthase family 3 (KS3) domain. Residues Cys-215, His-350, and His-392 each act as for beta-ketoacyl synthase activity in the active site. Positions 586-883 (WIFSGHGAQW…TPTMVRRQPA (298 aa)) are malonyl-CoA:ACP transacylase (MAT) domain. Ser-672 (for acyl/malonyl transferase activity) is an active-site residue. The tract at residues 942 to 1218 (THDPAANNLL…SFAGLEGESF (277 aa)) is product template (PT) domain. The segment at 948–1064 (NNLLGKRIAL…AAVGAANVVP (117 aa)) is N-terminal hotdog fold. Residues 948-1219 (NNLLGKRIAL…FAGLEGESFS (272 aa)) form the PKS/mFAS DH domain. The active-site Proton acceptor; for dehydratase activity is His-980. The interval 1079 to 1219 (PQKLADSFSI…FAGLEGESFS (141 aa)) is C-terminal hotdog fold. The active-site Proton donor; for dehydratase activity is the Asp-1138. In terms of domain architecture, Carrier spans 1703-1777 (QHLRDVINGC…HLVKHFTKEL (75 aa)). Ser-1737 carries the post-translational modification O-(pantetheine 4'-phosphoryl)serine.

The enzyme catalyses 3 malonyl-CoA + acetyl-CoA + NADPH + 3 H(+) = 6-methylsalicylate + 3 CO2 + NADP(+) + 4 CoA + H2O. It functions in the pathway secondary metabolite biosynthesis; terpenoid biosynthesis. Its function is as follows. Non-reducing polyketide synthase; part of the gene cluster that mediates the biosynthesis of yanuthone D, a fungal isoprenoid epoxycyclohexenone that acts as an antibiotic against fungi and bacteria. The first step of the pathway is the synthesis of 6-methylsalicylic acid (6-MSA) by the polyketide synthase yanA. 6-MSA is then converted to m-cresol by the decarboxylase yanB. The cytochrome P450 monooxygenase yanC then catalyzes the oxidation of m-cresol to toluquinol. Epoxidation of toluquinol is then performed by the short chain dehydrogenase yanD, with the help of yanE, and a further prenylation by yanG leads to 7-deacetoxyyanuthone A. The next step is the hydroxylation of C-22 of 7-deacetoxyyanuthone A by the cytochrome P450 monooxygenase yanH to yield 22-deacetylyanuthone A. O-Mevalon transferase yanI then attaches mevalon to the hydroxyl group of 22-deacetylyanuthone A to produce yanuthone E. Finally, the FAD-dependent monooxygenase yanF oxidizes the hydroxyl group at C15 of yanuthone E to form yanuthone D. Furthermore, several branching points in the pathway lead to the production of yanuthones F and G from 7-deacetoxyyanuthone A; yanuthones H and I from 22-deacetylyanuthone A; and yanuthone J from yanuthone E. In Aspergillus niger (strain ATCC 1015 / CBS 113.46 / FGSC A1144 / LSHB Ac4 / NCTC 3858a / NRRL 328 / USDA 3528.7), this protein is 6-methylsalicylic acid synthase.